Reading from the N-terminus, the 560-residue chain is Protein DETOXIFICATION 45, chloroplastic (560 aa).

Residues M1–K75 constitute a chloroplast transit peptide. 12 helical membrane-spanning segments follow: residues L109–M129, V147–A167, A209–G229, F250–I270, P280–Y300, G308–L328, F353–A373, V389–S411, F426–F446, G466–L486, Y495–P515, and V523–M543.

Belongs to the multi antimicrobial extrusion (MATE) (TC 2.A.66.1) family. Ubiquitous.

It localises to the plastid. The protein resides in the chloroplast membrane. This chain is Protein DETOXIFICATION 45, chloroplastic, found in Arabidopsis thaliana (Mouse-ear cress).